A 427-amino-acid chain; its full sequence is Histidinol dehydrogenase (427 aa).

3 residues coordinate NAD(+): tyrosine 125, glutamine 186, and asparagine 209. The substrate site is built by serine 234, glutamine 256, and histidine 259. Zn(2+) contacts are provided by glutamine 256 and histidine 259. Catalysis depends on proton acceptor residues glutamate 325 and histidine 326. 4 residues coordinate substrate: histidine 326, aspartate 359, glutamate 413, and histidine 419. Aspartate 359 serves as a coordination point for Zn(2+). Histidine 419 provides a ligand contact to Zn(2+).

It belongs to the histidinol dehydrogenase family. Zn(2+) is required as a cofactor.

The catalysed reaction is L-histidinol + 2 NAD(+) + H2O = L-histidine + 2 NADH + 3 H(+). It functions in the pathway amino-acid biosynthesis; L-histidine biosynthesis; L-histidine from 5-phospho-alpha-D-ribose 1-diphosphate: step 9/9. Catalyzes the sequential NAD-dependent oxidations of L-histidinol to L-histidinaldehyde and then to L-histidine. This chain is Histidinol dehydrogenase, found in Leptospira interrogans serogroup Icterohaemorrhagiae serovar copenhageni (strain Fiocruz L1-130).